Consider the following 311-residue polypeptide: Ribosomal RNA large subunit methyltransferase F (311 aa).

Belongs to the methyltransferase superfamily. METTL16/RlmF family.

It localises to the cytoplasm. It catalyses the reaction adenosine(1618) in 23S rRNA + S-adenosyl-L-methionine = N(6)-methyladenosine(1618) in 23S rRNA + S-adenosyl-L-homocysteine + H(+). Its function is as follows. Specifically methylates the adenine in position 1618 of 23S rRNA. The chain is Ribosomal RNA large subunit methyltransferase F from Pectobacterium atrosepticum (strain SCRI 1043 / ATCC BAA-672) (Erwinia carotovora subsp. atroseptica).